Here is a 277-residue protein sequence, read N- to C-terminus: Phosphate import ATP-binding protein PstB 2 (277 aa).

The 242-residue stretch at 31-272 folds into the ABC transporter domain; that stretch reads IEVPGLSLFY…PAKKQTEDYI (242 aa). 63–70 provides a ligand contact to ATP; it reads GPSGCGKS.

It belongs to the ABC transporter superfamily. Phosphate importer (TC 3.A.1.7) family. The complex is composed of two ATP-binding proteins (PstB), two transmembrane proteins (PstC and PstA) and a solute-binding protein (PstS).

It localises to the cell inner membrane. It catalyses the reaction phosphate(out) + ATP + H2O = ADP + 2 phosphate(in) + H(+). In terms of biological role, part of the ABC transporter complex PstSACB involved in phosphate import. Responsible for energy coupling to the transport system. This is Phosphate import ATP-binding protein PstB 2 from Pseudomonas putida (strain ATCC 47054 / DSM 6125 / CFBP 8728 / NCIMB 11950 / KT2440).